We begin with the raw amino-acid sequence, 465 residues long: Ribulose bisphosphate carboxylase large chain (465 aa).

N6,N6,N6-trimethyllysine is present on Lys4. Positions 113 and 163 each coordinate substrate. The active-site Proton acceptor is the Lys165. Lys167 lines the substrate pocket. 3 residues coordinate Mg(2+): Lys191, Asp193, and Glu194. Lys191 is subject to N6-carboxylysine. The active-site Proton acceptor is His284. Residues Arg285, His317, and Ser369 each coordinate substrate.

The protein belongs to the RuBisCO large chain family. Type I subfamily. As to quaternary structure, heterohexadecamer of 8 large chains and 8 small chains; disulfide-linked. The disulfide link is formed within the large subunit homodimers. Mg(2+) serves as cofactor. Post-translationally, the disulfide bond which can form in the large chain dimeric partners within the hexadecamer appears to be associated with oxidative stress and protein turnover.

The protein localises to the plastid. It localises to the chloroplast. The catalysed reaction is 2 (2R)-3-phosphoglycerate + 2 H(+) = D-ribulose 1,5-bisphosphate + CO2 + H2O. It carries out the reaction D-ribulose 1,5-bisphosphate + O2 = 2-phosphoglycolate + (2R)-3-phosphoglycerate + 2 H(+). Its function is as follows. RuBisCO catalyzes two reactions: the carboxylation of D-ribulose 1,5-bisphosphate, the primary event in carbon dioxide fixation, as well as the oxidative fragmentation of the pentose substrate in the photorespiration process. Both reactions occur simultaneously and in competition at the same active site. The polypeptide is Ribulose bisphosphate carboxylase large chain (Morus rubra (Red mulberry)).